The chain runs to 349 residues: UPF0284 protein MA_3887 (349 aa).

This sequence belongs to the UPF0284 family.

This Methanosarcina acetivorans (strain ATCC 35395 / DSM 2834 / JCM 12185 / C2A) protein is UPF0284 protein MA_3887.